Consider the following 800-residue polypeptide: DEP domain-containing protein 1A (800 aa).

A DEP domain is found at 24–108 (FRAGMPLKKH…DNSQLYRFPS (85 aa)). Disordered regions lie at residues 147–173 (ETLENVDPETQESPVGSSSGETERSRE), 306–326 (SQPGKRKNQEEPNCPQPAKNP), and 459–485 (INTSGSSVSSQLSADLRRNNSRPARAR). Positions 281-321 (PLLTYQYYELFVNILVMCGYITTPKSQPGKRKNQEEPNCPQ) constitute a Rho-GAP domain. A compositionally biased stretch (low complexity) spans 459–468 (INTSGSSVSS).

The protein is DEP domain-containing protein 1A (depdc1a) of Danio rerio (Zebrafish).